The sequence spans 1025 residues: MKFFALFIYRPVATILLSVAITLCGILGFRMLPVAPLPQVDFPVIMVSASLPGASPETMASSVATPLERSLGRIAGVSEMTSSSSLGSTRIILQFDFDRDINGAARDVQAAINAAQSLLPSGMPSRPTYRKANPSDAPIMILTLTSDTYSQGELYDFASTQLAPTISQIDGVGDVDVGGSSLPAVRVGLNPQALFNQGVSLDDVRTAVSNANVRKPQGALEDGTHRWQIQTNDELKTAAEYQPLIIHYNNGGAVRLGDVATVTDSVQDVRNAGMTNAKPAILLMIRKLPEANIIQTVDSIRAKLPELQETIPAAIDLQIAQDRSPTIRASLEEVEQTLIISVALVILVVFLFLRSGRATIIPAVSVPVSLIGTFAAMYLCGFSLNNLSLMALTIATGFVVDDAIVVLENIARHLEAGMKPLQAALQGTREVGFTVLSMSLSLVAVFLPLLLMGGLPGRLLREFTVTLSVAIGISLLVSLTLTPMMCGWMLKASKPREQKRLRGFGRMLVALQQGYGKSLKWVLNHTRLVGVVLLGTIALNIWLYISIPKTFFPEQDTGVLMGGIQADQSISFQAMRGKLQDFMKIIRDDPAVDNVTGFTGGSRVNSGMMFITLKPRDERSETAQQIIDRLRVKLAKEPGANLFLMAVQDIRVGGRQSNASYQYTLLSDDLAALREWEPKIRKKLATLPELADVNSDQQDNGAEMNLVYDRDTMARLGIDVQAANSLLNNAFGQRQISTIYQPMNQYKVVMEVDPRYTQDISALEKMFVINNEGKAIPLSYFAKWQPANAPLSVNHQGLSAASTISFNLPTGKSLSDASAAIDRAMTQLGVPSTVRGSFAGTAQVFQETMNSQVILIIAAIATVYIVLGILYESYVHPLTILSTLPSAGVGALLALELFNAPFSLIALIGIMLLIGIVKKNAIMMVDFALEAQRHGNLTPQEAIFQACLLRFRPIMMTTLAALFGALPLVLSGGDGSELRHPLGITIVGGLVMSQLLTLYTTPVVYLFFDRLRLRFSRKPKQTVTE.

Helical transmembrane passes span 3–23, 333–353, 360–380, 387–407, 431–451, 469–489, 528–548, 853–873, 875–895, 897–917, 953–973, and 984–1004; these read FFALFIYRPVATILLSVAITL, EVEQTLIISVALVILVVFLFL, IIPAVSVPVSLIGTFAAMYLC, LSLMALTIATGFVVDDAIVVL, VGFTVLSMSLSLVAVFLPLLL, VAIGISLLVSLTLTPMMCGWM, LVGVVLLGTIALNIWLYISIP, VILIIAAIATVYIVLGILYES, VHPLTILSTLPSAGVGALLAL, LFNAPFSLIALIGIMLLIGIV, PIMMTTLAALFGALPLVLSGG, and ITIVGGLVMSQLLTLYTTPVV.

This sequence belongs to the resistance-nodulation-cell division (RND) (TC 2.A.6) family. MdtC subfamily. As to quaternary structure, part of a tripartite efflux system composed of MdtA, MdtB and MdtC. MdtC forms a heteromultimer with MdtB.

Its subcellular location is the cell inner membrane. Functionally, the MdtABC tripartite complex confers resistance against novobiocin and deoxycholate. This is Multidrug resistance protein MdtC from Escherichia coli O9:H4 (strain HS).